The sequence spans 511 residues: Phosphomethylpyrimidine synthase (511 aa).

Substrate-binding positions include Asn127, Met156, Tyr185, His221, 241–243 (SRG), 282–285 (DGLR), and Glu321. Residue His325 coordinates Zn(2+). Position 348 (Tyr348) interacts with substrate. Position 389 (His389) interacts with Zn(2+). Cys469, Cys472, and Cys477 together coordinate [4Fe-4S] cluster. Positions 492 to 511 (KGMEEKSEVTICNRKKESGK) are disordered.

Belongs to the ThiC family. [4Fe-4S] cluster is required as a cofactor.

It carries out the reaction 5-amino-1-(5-phospho-beta-D-ribosyl)imidazole + S-adenosyl-L-methionine = 4-amino-2-methyl-5-(phosphooxymethyl)pyrimidine + CO + 5'-deoxyadenosine + formate + L-methionine + 3 H(+). It participates in cofactor biosynthesis; thiamine diphosphate biosynthesis. In terms of biological role, catalyzes the synthesis of the hydroxymethylpyrimidine phosphate (HMP-P) moiety of thiamine from aminoimidazole ribotide (AIR) in a radical S-adenosyl-L-methionine (SAM)-dependent reaction. The chain is Phosphomethylpyrimidine synthase from Leptospira borgpetersenii serovar Hardjo-bovis (strain JB197).